A 139-amino-acid chain; its full sequence is Arsenate reductase (139 aa).

Residues Cys-10, Cys-82, and Cys-89 each act as nucleophile in the active site. Disulfide bonds link Cys-10–Cys-82 and Cys-82–Cys-89.

The protein belongs to the low molecular weight phosphotyrosine protein phosphatase family. Thioredoxin-coupled ArsC subfamily.

It localises to the cytoplasm. It carries out the reaction arsenate + [thioredoxin]-dithiol + H(+) = arsenite + [thioredoxin]-disulfide + H2O. Catalyzes the reduction of arsenate [As(V)] to arsenite [As(III)]. The sequence is that of Arsenate reductase from Oceanobacillus iheyensis (strain DSM 14371 / CIP 107618 / JCM 11309 / KCTC 3954 / HTE831).